The sequence spans 333 residues: 4-hydroxy-3-methylbut-2-enyl diphosphate reductase (333 aa).

Cys-20 contacts [4Fe-4S] cluster. Residues His-49 and His-82 each contribute to the (2E)-4-hydroxy-3-methylbut-2-enyl diphosphate site. His-49 and His-82 together coordinate dimethylallyl diphosphate. The isopentenyl diphosphate site is built by His-49 and His-82. Cys-104 contributes to the [4Fe-4S] cluster binding site. Residue His-132 participates in (2E)-4-hydroxy-3-methylbut-2-enyl diphosphate binding. His-132 is a binding site for dimethylallyl diphosphate. His-132 contributes to the isopentenyl diphosphate binding site. The Proton donor role is filled by Glu-134. Thr-172 serves as a coordination point for (2E)-4-hydroxy-3-methylbut-2-enyl diphosphate. Residue Cys-202 coordinates [4Fe-4S] cluster. Positions 230, 231, 232, and 274 each coordinate (2E)-4-hydroxy-3-methylbut-2-enyl diphosphate. The dimethylallyl diphosphate site is built by Ser-230, Ser-231, Asn-232, and Ser-274. Residues Ser-230, Ser-231, Asn-232, and Ser-274 each coordinate isopentenyl diphosphate.

This sequence belongs to the IspH family. Requires [4Fe-4S] cluster as cofactor.

It catalyses the reaction isopentenyl diphosphate + 2 oxidized [2Fe-2S]-[ferredoxin] + H2O = (2E)-4-hydroxy-3-methylbut-2-enyl diphosphate + 2 reduced [2Fe-2S]-[ferredoxin] + 2 H(+). The catalysed reaction is dimethylallyl diphosphate + 2 oxidized [2Fe-2S]-[ferredoxin] + H2O = (2E)-4-hydroxy-3-methylbut-2-enyl diphosphate + 2 reduced [2Fe-2S]-[ferredoxin] + 2 H(+). It participates in isoprenoid biosynthesis; dimethylallyl diphosphate biosynthesis; dimethylallyl diphosphate from (2E)-4-hydroxy-3-methylbutenyl diphosphate: step 1/1. Its pathway is isoprenoid biosynthesis; isopentenyl diphosphate biosynthesis via DXP pathway; isopentenyl diphosphate from 1-deoxy-D-xylulose 5-phosphate: step 6/6. Functionally, catalyzes the conversion of 1-hydroxy-2-methyl-2-(E)-butenyl 4-diphosphate (HMBPP) into a mixture of isopentenyl diphosphate (IPP) and dimethylallyl diphosphate (DMAPP). Acts in the terminal step of the DOXP/MEP pathway for isoprenoid precursor biosynthesis. In Polaromonas sp. (strain JS666 / ATCC BAA-500), this protein is 4-hydroxy-3-methylbut-2-enyl diphosphate reductase.